A 1001-amino-acid polypeptide reads, in one-letter code: UPF0182 protein Mjls_1469 (1001 aa).

A run of 7 helical transmembrane segments spans residues 16 to 36, 61 to 81, 112 to 132, 174 to 194, 209 to 229, 258 to 278, and 286 to 306; these read VLIG…RFID, VVVF…GLAL, LFGF…AQSY, FVAT…FGGI, IQLV…YWLD, KLIL…AIVL, and IGVV…PLVV. Residues 900-929 are compositionally biased toward low complexity; the sequence is ATGPAPANLPDGQPAAQPPNGQQPAAQTPG. A disordered region spans residues 900–977; the sequence is ATGPAPANLP…MSGLQDAQRS (78 aa).

It belongs to the UPF0182 family.

It localises to the cell membrane. This chain is UPF0182 protein Mjls_1469, found in Mycobacterium sp. (strain JLS).